The primary structure comprises 716 residues: Inhibitor of nuclear factor kappa-B kinase subunit epsilon (716 aa).

The Protein kinase domain occupies 9–315 (WHTDDLLGQG…LQRVVVHVFS (307 aa)). 15–23 (LGQGATASV) contributes to the ATP binding site. A Glycyl lysine isopeptide (Lys-Gly) (interchain with G-Cter in ubiquitin) cross-link involves residue Lys-30. ATP is bound at residue Lys-38. Asp-135 serves as the catalytic Proton acceptor. Residue Ser-172 is modified to Phosphoserine; by autocatalysis and IKKB. A Glycyl lysine isopeptide (Lys-Gly) (interchain with G-Cter in SUMO1) cross-link involves residue Lys-231. Residues 383–647 (STAIPKGLAF…VQESLSKLLE (265 aa)) are interaction with DDX3X. A Glycyl lysine isopeptide (Lys-Gly) (interchain with G-Cter in ubiquitin) cross-link involves residue Lys-401. The leucine-zipper stretch occupies residues 436 to 457 (QELMFRGLHWVMEVLQATCRRT). Thr-501 bears the Phosphothreonine mark. Position 664 is a phosphoserine (Ser-664).

The protein belongs to the protein kinase superfamily. Ser/Thr protein kinase family. I-kappa-B kinase subfamily. Homodimer. Interacts with MAVS/IPS1. Interacts (via protein kinase domain) with TTLL12 (via N-terminus); the interaction prevents MAVS binding to IKBKE. Interacts with the adapter proteins AZI2/NAP1, TANK and TBKBP1/SINTBAD. Interacts with SIKE1. Interacts with TICAM1/TRIF, IRF3 and RIGI; interactions are disrupted by the interaction between IKBKE and SIKE1. Interacts with TOPORS; induced by DNA damage. Interacts with CYLD. Interacts (when polyubiquitinated) with IKBKB, IKBKG and MYD88. Interacts with IFIH1. Interacts with DDX3X; the interaction may be induced upon virus infection. Interacts with TRIM6 (via SPRY box). Interacts with unanchored K48-linked polyubiquitin chains; this leads to IKBKE activation. Interacts with TBK1. Interacts with FKBP5. As to quaternary structure, (Microbial infection) Interacts (via Protein kinase domain) with arenavirus protein N; the interaction inhibits IKBKE kinase function. In terms of assembly, (Microbial infection) Interacts with Ebola virus protein VP35; the interaction leads to inhibition of cellular antiviral response by blocking necessary interactions between the IKBKE and MAVS/IPS as well as its substrates IRF3 and IRF7. (Microbial infection) Interacts with Severe fever with thrombocytopenia virus (SFTSV) NSs; this interaction this interaction sequesters IKBKE in NSs-induced cytoplasmic inclusion bodies thereby inhibiting the IFN responses. As to quaternary structure, (Microbial infection) Interacts with human T-cell leukemia virus 1/HTLV-1 protein HBZ. In terms of assembly, (Microbial infection) Interacts with Epstein-Barr virus (EBV) protein NEC2/BFRF1; this interaction inhibits IKBKE kinase activity and IRF3 nuclear translocation. Autophosphorylated and phosphorylated by IKBKB/IKKB. Phosphorylation at Ser-172 is enhanced by the interaction with DDX3X. Phosphorylated at Thr-501 upon IFN activation. Post-translationally, sumoylation by TOPORS upon DNA damage is required for protection of cells against DNA damage-induced cell death. Desumoylated by SENP1. In terms of processing, 'Lys-63'-linked polyubiquitinated at Lys-30 and Lys-401 by TRAF2:BIRC2 and TRAF2:BIRC3 complexes. Ubiquitination is induced by LPS, TNFA and interleukin-1 and required for full kinase activity and KF-kappa-B pathway activation. As to expression, highly expressed in spleen followed by thymus, peripheral blood leukocytes, pancreas, placenta. Weakly expressed in lung, kidney, prostate, ovary and colon.

The protein localises to the cytoplasm. It localises to the nucleus. Its subcellular location is the PML body. The catalysed reaction is L-seryl-[I-kappa-B protein] + ATP = O-phospho-L-seryl-[I-kappa-B protein] + ADP + H(+). Functionally, serine/threonine kinase that plays an essential role in regulating inflammatory responses to viral infection, through the activation of the type I IFN, NF-kappa-B and STAT signaling. Also involved in TNFA and inflammatory cytokines, like Interleukin-1, signaling. Following activation of viral RNA sensors, such as RIG-I-like receptors, associates with DDX3X and phosphorylates interferon regulatory factors (IRFs), IRF3 and IRF7, as well as DDX3X. This activity allows subsequent homodimerization and nuclear translocation of the IRF3 leading to transcriptional activation of pro-inflammatory and antiviral genes including IFNB. In order to establish such an antiviral state, IKBKE forms several different complexes whose composition depends on the type of cell and cellular stimuli. Thus, several scaffolding molecules including IPS1/MAVS, TANK, AZI2/NAP1 or TBKBP1/SINTBAD can be recruited to the IKBKE-containing-complexes. Activated by polyubiquitination in response to TNFA and interleukin-1, regulates the NF-kappa-B signaling pathway through, at least, the phosphorylation of CYLD. Phosphorylates inhibitors of NF-kappa-B thus leading to the dissociation of the inhibitor/NF-kappa-B complex and ultimately the degradation of the inhibitor. In addition, is also required for the induction of a subset of ISGs which displays antiviral activity, may be through the phosphorylation of STAT1 at 'Ser-708'. Phosphorylation of STAT1 at 'Ser-708' also seems to promote the assembly and DNA binding of ISGF3 (STAT1:STAT2:IRF9) complexes compared to GAF (STAT1:STAT1) complexes, in this way regulating the balance between type I and type II IFN responses. Protects cells against DNA damage-induced cell death. Also plays an important role in energy balance regulation by sustaining a state of chronic, low-grade inflammation in obesity, wich leads to a negative impact on insulin sensitivity. Phosphorylates AKT1. The sequence is that of Inhibitor of nuclear factor kappa-B kinase subunit epsilon (IKBKE) from Homo sapiens (Human).